Here is a 555-residue protein sequence, read N- to C-terminus: Cytochrome P450 monooxygenase abl2 (555 aa).

2 helical membrane-spanning segments follow: residues 38–58 (SFDLFSKLAGLALLSFAALFI) and 141–161 (VFIGAVAKVGGAVGISMAPLA). N-linked (GlcNAc...) asparagine glycosylation is found at Asn-325 and Asn-360. Cys-489 is a heme binding site.

Belongs to the cytochrome P450 family. Requires heme as cofactor.

Its subcellular location is the membrane. The protein operates within hormone biosynthesis. In terms of biological role, cytochrome P450 monooxygenase; part of the gene cluster that mediates the biosynthesis of abscisic acid (ABA), a phytohormone that acts antagonistically toward salicylic acid (SA), jasmonic acid (JA) and ethylene (ETH) signaling, to impede plant defense responses. The first step of the pathway catalyzes the reaction from farnesyl diphosphate to alpha-ionylideneethane performed by the alpha-ionylideneethane synthase abl3 via a three-step reaction mechanism involving 2 neutral intermediates, beta-farnesene and allofarnesene. The cytochrome P450 monooxygenase abl1 might then be involved in the conversion of alpha-ionylideneethane to alpha-ionylideneacetic acid. Alpha-ionylideneacetic acid is further converted to abscisic acid in 2 steps involving the cytochrome P450 monooxygenase abl2 and the short-chain dehydrogenase/reductase abl4, via the intermediates 1'-deoxy-ABA or 1',4'-trans-diol-ABA, depending on the order of action of these 2 enzymes. Abl2 is responsible for the hydroxylation of carbon atom C-1' and abl4 might be involved in the oxidation of the C-4' carbon atom. In Leptosphaeria maculans (strain JN3 / isolate v23.1.3 / race Av1-4-5-6-7-8) (Blackleg fungus), this protein is Cytochrome P450 monooxygenase abl2.